The following is a 251-amino-acid chain: Ubiquinone/menaquinone biosynthesis C-methyltransferase UbiE (251 aa).

S-adenosyl-L-methionine is bound by residues T74, D95, 123 to 124, and S140; that span reads NA.

The protein belongs to the class I-like SAM-binding methyltransferase superfamily. MenG/UbiE family.

The catalysed reaction is a 2-demethylmenaquinol + S-adenosyl-L-methionine = a menaquinol + S-adenosyl-L-homocysteine + H(+). It carries out the reaction a 2-methoxy-6-(all-trans-polyprenyl)benzene-1,4-diol + S-adenosyl-L-methionine = a 5-methoxy-2-methyl-3-(all-trans-polyprenyl)benzene-1,4-diol + S-adenosyl-L-homocysteine + H(+). The protein operates within quinol/quinone metabolism; menaquinone biosynthesis; menaquinol from 1,4-dihydroxy-2-naphthoate: step 2/2. It participates in cofactor biosynthesis; ubiquinone biosynthesis. Methyltransferase required for the conversion of demethylmenaquinol (DMKH2) to menaquinol (MKH2) and the conversion of 2-polyprenyl-6-methoxy-1,4-benzoquinol (DDMQH2) to 2-polyprenyl-3-methyl-6-methoxy-1,4-benzoquinol (DMQH2). The polypeptide is Ubiquinone/menaquinone biosynthesis C-methyltransferase UbiE (Proteus mirabilis (strain HI4320)).